A 161-amino-acid polypeptide reads, in one-letter code: Globin CTT-VIIB-8 (161 aa).

The signal sequence occupies residues 1-16 (MKFFAVLALCIVGAIA). A Globin domain is found at 18 to 161 (PLTADEASLV…NTYAIVVPRL (144 aa)). Heme b-binding residues include His76 and His111.

Belongs to the globin family. In terms of assembly, homodimer.

This chain is Globin CTT-VIIB-8 (CTT-7B8), found in Chironomus thummi thummi (Midge).